We begin with the raw amino-acid sequence, 284 residues long: Non-selective voltage-gated ion channel VDAC3 (284 aa).

C2 is subject to N-acetylcysteine. T4 carries the phosphothreonine modification. N6-acetyllysine occurs at positions 12, 15, and 20. Transmembrane regions (beta stranded) follow at residues 26–35 (MVKIDLKTKS) and 39–48 (VMEFSTSGHA). A Glycyl lysine isopeptide (Lys-Gly) (interchain with G-Cter in ubiquitin) cross-link involves residue K54. A run of 3 beta stranded transmembrane segments spans residues 55–65 (ASGNLETKYKV), 70–77 (LTFTQKWN), and 81–90 (TLGTEISWEN). N6-acetyllysine is present on K91. The chain crosses the membrane as a beta stranded span at residues 96-105 (LKLTLDTIFV). Residues K110 and K111 each participate in a glycyl lysine isopeptide (Lys-Gly) (interchain with G-Cter in ubiquitin) cross-link. Transmembrane regions (beta stranded) follow at residues 112-121 (SGKLKASYKR), 124-131 (FSVGSNVD), 138-146 (TIYGWAVLA), 151-159 (LAGYQMSFD), 164-176 (KLSQNNFALGYKA), 179-186 (FQLHTHVN), 190-199 (EFGGSIYQKV), 203-212 (IETSINLAWT), 219-228 (RFGIAAKYML), and 232-239 (TSLSAKVN). S242 is modified (phosphoserine). Residues 243 to 245 (LIG) and 261 to 265 (SALID) contribute to the NAD(+) site. The next 2 beta stranded transmembrane spans lie at 243-252 (LIGLGYTQTL) and 255-264 (GVKLTLSALI). N6-acetyllysine; alternate is present on K267. K267 participates in a covalent cross-link: Glycyl lysine isopeptide (Lys-Gly) (interchain with G-Cter in ubiquitin); alternate. Residues 274–283 (HKVGLGFELE) traverse the membrane as a beta stranded segment.

This sequence belongs to the eukaryotic mitochondrial porin family. In terms of assembly, interacts with ARMC12 in a TBC1D21-dependent manner. Interacts with MISFA. In terms of processing, ubiquitinated by PRKN during mitophagy, leading to its degradation and enhancement of mitophagy. Deubiquitinated by USP30.

The protein localises to the mitochondrion outer membrane. The protein resides in the membrane. The enzyme catalyses chloride(in) = chloride(out). The catalysed reaction is K(+)(in) = K(+)(out). Its function is as follows. Non-selective voltage-gated ion channel that mediates the transport of anions and cations through the mitochondrion outer membrane and plasma membrane. Forms a high-conducting channel with a stable open state and a voltage-induced closure with a mild preference for anions over cations. Involved in male fertility and sperm mitochondrial sheath formation. The protein is Non-selective voltage-gated ion channel VDAC3 of Pongo abelii (Sumatran orangutan).